Reading from the N-terminus, the 906-residue chain is Coatomer subunit beta' (906 aa).

WD repeat units lie at residues 13–52 (ARSD…LVKT), 55–94 (VCDL…RVHM), 97–136 (AHSD…SCSQ), 140–180 (GHTH…PNFT), 183–224 (GHEK…CVQT), 227–266 (GHAQ…LEST), 350–388 (SCEI…NKSF), and 390–425 (SAQE…KSFK). Lysine 627 is subject to N6-acetyllysine. A WD 9 repeat occupies 746 to 783 (IRTGRLPEAAFLARTYLPSQVSRVVKLWRENLSKVNQK). The segment at 837-862 (EEAKGFQPSRSTAQQELDGKPASPTP) is disordered. Serine 859 carries the post-translational modification Phosphoserine. At threonine 861 the chain carries Phosphothreonine. Residues 866-890 (ASHTANKEEKSLLELEVDLDNLELE) adopt a coiled-coil conformation.

This sequence belongs to the WD repeat COPB2 family. As to quaternary structure, oligomeric complex that consists of at least the alpha, beta, beta', gamma, delta, epsilon and zeta subunits. Probably interacts with PEX11A. Interacts with SCYL1. Interacts with JAGN1.

The protein localises to the cytoplasm. Its subcellular location is the cytosol. The protein resides in the golgi apparatus membrane. It is found in the cytoplasmic vesicle. It localises to the COPI-coated vesicle membrane. Its function is as follows. The coatomer is a cytosolic protein complex that binds to dilysine motifs and reversibly associates with Golgi non-clathrin-coated vesicles, which further mediate biosynthetic protein transport from the ER, via the Golgi up to the trans Golgi network. Coatomer complex is required for budding from Golgi membranes, and is essential for the retrograde Golgi-to-ER transport of dilysine-tagged proteins. In mammals, the coatomer can only be recruited by membranes associated to ADP-ribosylation factors (ARFs), which are small GTP-binding proteins; the complex also influences the Golgi structural integrity, as well as the processing, activity, and endocytic recycling of LDL receptors. This coatomer complex protein, essential for Golgi budding and vesicular trafficking, is a selective binding protein (RACK) for protein kinase C, epsilon type. It binds to Golgi membranes in a GTP-dependent manner. In Macaca fascicularis (Crab-eating macaque), this protein is Coatomer subunit beta' (COPB2).